The sequence spans 131 residues: RutC family protein YjgH (131 aa).

Belongs to the RutC family.

The chain is RutC family protein YjgH (yjgH) from Escherichia coli (strain K12).